Here is an 827-residue protein sequence, read N- to C-terminus: Polyhomeotic-like protein 2 (827 aa).

Disordered regions lie at residues 1–78 (MEKE…QYLQ), 282–316 (GLGA…SDLT), and 482–545 (QEPT…PPQA). The span at 9–38 (SVASSASVTIPSTTSVSTSTSAGTLSNSSS) shows a compositional bias: low complexity. The segment covering 485–498 (TRTELRQSDKESQV) has biased composition (basic and acidic residues). A compositionally biased stretch (polar residues) spans 517–538 (AMTSGSGNNAPTVTGSAPQNGE). The HD1 signature appears at 540 to 570 (KPPPQAVVKPQILTHVIEGFVIQEGAEPFPV). The FCS-type zinc finger occupies 609–643 (NNQPEPVRTCEFCGNVDFAFNFKRSKRFCSTVCAK). Positions 618, 621, 637, and 641 each coordinate Zn(2+). Residues 653-730 (MGLFPGKSSP…EPISPLSNSS (78 aa)) form a disordered region. Residues 661 to 675 (SPEDTKKPKASDESP) are compositionally biased toward basic and acidic residues. Composition is skewed to polar residues over residues 687-696 (PSIQTTTGAS) and 708-717 (GESSQCSDMS). The SAM domain occupies 763 to 827 (WNVEDVYEFI…FARISMLKDS (65 aa)).

In terms of assembly, component of a PRC1-like complex. As to expression, isoform 1 expression is stronger at the posterior border than in the anterior region within individual somites; On the contrary, isoform 2 expression is higher at the posterior border.

The protein resides in the nucleus. Its function is as follows. Component of a Polycomb group (PcG) multiprotein PRC1-like complex, a complex class required to maintain the transcriptionally repressive state of many genes, including Hox genes, throughout development. PcG PRC1 complex acts via chromatin remodeling and modification of histones; it mediates monoubiquitination of histone H2A 'Lys-119', rendering chromatin heritably changed in its expressibility. The chain is Polyhomeotic-like protein 2 (phc2) from Danio rerio (Zebrafish).